Consider the following 297-residue polypeptide: Lipoyl synthase (297 aa).

The [4Fe-4S] cluster site is built by Cys-37, Cys-42, Cys-48, Cys-63, Cys-67, Cys-70, and Ser-276. A Radical SAM core domain is found at 49-265 (WSRKHATVMI…ERIAKTKGFL (217 aa)).

Belongs to the radical SAM superfamily. Lipoyl synthase family. The cofactor is [4Fe-4S] cluster.

Its subcellular location is the cytoplasm. The enzyme catalyses [[Fe-S] cluster scaffold protein carrying a second [4Fe-4S](2+) cluster] + N(6)-octanoyl-L-lysyl-[protein] + 2 oxidized [2Fe-2S]-[ferredoxin] + 2 S-adenosyl-L-methionine + 4 H(+) = [[Fe-S] cluster scaffold protein] + N(6)-[(R)-dihydrolipoyl]-L-lysyl-[protein] + 4 Fe(3+) + 2 hydrogen sulfide + 2 5'-deoxyadenosine + 2 L-methionine + 2 reduced [2Fe-2S]-[ferredoxin]. Its pathway is protein modification; protein lipoylation via endogenous pathway; protein N(6)-(lipoyl)lysine from octanoyl-[acyl-carrier-protein]: step 2/2. Functionally, catalyzes the radical-mediated insertion of two sulfur atoms into the C-6 and C-8 positions of the octanoyl moiety bound to the lipoyl domains of lipoate-dependent enzymes, thereby converting the octanoylated domains into lipoylated derivatives. The polypeptide is Lipoyl synthase (Rickettsia typhi (strain ATCC VR-144 / Wilmington)).